Consider the following 89-residue polypeptide: MKTSVMFMLVIVISLMCSGEAQEVARTYCGRHLADTLADLCFGVEKRGGAQYAPYFWTRQYLGSRGKRGVVDECCFRPCTLDVLLSYCG.

A signal peptide spans 1 to 19 (MKTSVMFMLVIVISLMCSG). 3 disulfides stabilise this stretch: cysteine 29–cysteine 75, cysteine 41–cysteine 88, and cysteine 74–cysteine 79. The propeptide at 48-66 (GGAQYAPYFWTRQYLGSRG) is c peptide like.

The protein belongs to the insulin family. As to quaternary structure, heterodimer of a B chain and an A chain linked by two disulfide bonds.

It localises to the secreted. Brain peptide responsible for activation of prothoracic glands to produce ecdysone in insects. In Bombyx mori (Silk moth), this protein is Bombyxin B-1 (BBXB1).